The primary structure comprises 339 residues: Alpha-N-dichloroacetyl-p-aminophenylserinol N-oxygenase (339 aa).

A compositionally biased stretch (basic and acidic residues) spans 1-19; that stretch reads MRDHTDEKSEAAGNDDGHV. A disordered region spans residues 1-22; that stretch reads MRDHTDEKSEAAGNDDGHVRIG. Residues Glu109, Glu144, His147, Glu205, His232, Glu236, and His239 each contribute to the Fe cation site.

This sequence belongs to the AurF N-oxygenase family. The cofactor is Fe(2+).

The enzyme catalyses alpha-N-dichloroacetyl-p-aminophenylserinol + AH2 + 2 O2 = chloramphenicol + A + 2 H2O. It functions in the pathway antibiotic biosynthesis. Its function is as follows. Involved in chloramphenicol biosynthesis. Catalyzes the six-electron oxidation of an aryl-amine precursor of chloramphenicol (NH2-CAM) to yield the aryl-nitro group of chloramphenicol (CAM). During catalysis, upon exposure of the diferrous cluster to O(2), ClmI forms an exceptionally long-lived peroxo intermediate (CmlI-peroxo), which reacts with NH2-CAM to form CAM. The chain is Alpha-N-dichloroacetyl-p-aminophenylserinol N-oxygenase from Streptomyces venezuelae (strain ATCC 10712 / CBS 650.69 / DSM 40230 / JCM 4526 / NBRC 13096 / PD 04745).